An 80-amino-acid polypeptide reads, in one-letter code: Acyl carrier protein (80 aa).

A Carrier domain is found at 4–79; the sequence is QEIFEKVKAV…DAVEYIKAKL (76 aa). S39 carries the post-translational modification O-(pantetheine 4'-phosphoryl)serine.

This sequence belongs to the acyl carrier protein (ACP) family. Post-translationally, 4'-phosphopantetheine is transferred from CoA to a specific serine of apo-ACP by AcpS. This modification is essential for activity because fatty acids are bound in thioester linkage to the sulfhydryl of the prosthetic group.

The protein localises to the cytoplasm. Its pathway is lipid metabolism; fatty acid biosynthesis. Its function is as follows. Carrier of the growing fatty acid chain in fatty acid biosynthesis. This Thermus thermophilus (strain ATCC BAA-163 / DSM 7039 / HB27) protein is Acyl carrier protein.